A 236-amino-acid polypeptide reads, in one-letter code: tRNA (guanine-N(1)-)-methyltransferase (236 aa).

Residues G116 and 136-141 (LGDFVL) each bind S-adenosyl-L-methionine.

Belongs to the RNA methyltransferase TrmD family. Homodimer.

It localises to the cytoplasm. It carries out the reaction guanosine(37) in tRNA + S-adenosyl-L-methionine = N(1)-methylguanosine(37) in tRNA + S-adenosyl-L-homocysteine + H(+). Functionally, specifically methylates guanosine-37 in various tRNAs. This Thiobacillus denitrificans (strain ATCC 25259 / T1) protein is tRNA (guanine-N(1)-)-methyltransferase.